The sequence spans 398 residues: Acetate kinase (398 aa).

N7 serves as a coordination point for Mg(2+). K14 is an ATP binding site. A substrate-binding site is contributed by R90. The active-site Proton donor/acceptor is the D147. ATP contacts are provided by residues 207 to 211 (HLGNG), 282 to 284 (DMR), and 330 to 334 (GIGEN). E383 serves as a coordination point for Mg(2+).

This sequence belongs to the acetokinase family. In terms of assembly, homodimer. Requires Mg(2+) as cofactor. It depends on Mn(2+) as a cofactor.

It is found in the cytoplasm. It catalyses the reaction acetate + ATP = acetyl phosphate + ADP. It functions in the pathway metabolic intermediate biosynthesis; acetyl-CoA biosynthesis; acetyl-CoA from acetate: step 1/2. In terms of biological role, catalyzes the formation of acetyl phosphate from acetate and ATP. Can also catalyze the reverse reaction. The protein is Acetate kinase of Symbiobacterium thermophilum (strain DSM 24528 / JCM 14929 / IAM 14863 / T).